The sequence spans 436 residues: Anaerobic glycerol-3-phosphate dehydrogenase subunit B (436 aa).

It belongs to the anaerobic G-3-P dehydrogenase subunit B family. In terms of assembly, composed of a catalytic GlpA/B dimer and of membrane bound GlpC. FMN is required as a cofactor.

It catalyses the reaction a quinone + sn-glycerol 3-phosphate = dihydroxyacetone phosphate + a quinol. It participates in polyol metabolism; glycerol degradation via glycerol kinase pathway; glycerone phosphate from sn-glycerol 3-phosphate (anaerobic route): step 1/1. In terms of biological role, conversion of glycerol 3-phosphate to dihydroxyacetone. Uses fumarate or nitrate as electron acceptor. The protein is Anaerobic glycerol-3-phosphate dehydrogenase subunit B of Vibrio cholerae serotype O1 (strain M66-2).